The following is a 319-amino-acid chain: MSKKTKQELENNKLSKRLRHAVGDAINDFNMIEPGDKIMVCLSGGKDSYALLDILRQLQASAPIDFELVAVNLDQKQPGFPEEVLPTYLESIGVPYKIVEEDTYSTVKRVLDEGKTTCSLCSRLRRGILYRTAKELGCTKIALGHHRDDILATMFLNMFYGGKLKAMPPKLVSDNGEHIVIRPLAYVKEKDLIKYAELKQFPIIPCNLCGSQPNLQRQVIGDMLRDWDKRFPGRIESMFSALQNVVPSHLADTELFDFAGLERGQTLKHGGDLAFDSEKMPERFSDGSEEDESEIKIAPQKAERKVINILANKPKTCGA.

The PP-loop motif signature appears at S43–S48. [4Fe-4S] cluster contacts are provided by C118, C121, and C209.

It belongs to the TtcA family. Homodimer. It depends on Mg(2+) as a cofactor. [4Fe-4S] cluster is required as a cofactor.

The protein resides in the cytoplasm. The enzyme catalyses cytidine(32) in tRNA + S-sulfanyl-L-cysteinyl-[cysteine desulfurase] + AH2 + ATP = 2-thiocytidine(32) in tRNA + L-cysteinyl-[cysteine desulfurase] + A + AMP + diphosphate + H(+). It functions in the pathway tRNA modification. Its function is as follows. Catalyzes the ATP-dependent 2-thiolation of cytidine in position 32 of tRNA, to form 2-thiocytidine (s(2)C32). The sulfur atoms are provided by the cysteine/cysteine desulfurase (IscS) system. The chain is tRNA-cytidine(32) 2-sulfurtransferase from Neisseria meningitidis serogroup C (strain 053442).